A 207-amino-acid polypeptide reads, in one-letter code: Ras-related protein Rab-7a (207 aa).

T2 is modified (N-acetylthreonine). Residues S17, G18, V19, G20, K21, T22, S23, S34, N35, Y37, and T40 each contribute to the GTP site. T22 provides a ligand contact to Mg(2+). Residues 28-41 carry the Switch 1 motif; that stretch reads YVNKKFSNQYKATI. T40 and D63 together coordinate Mg(2+). Residue G66 coordinates GTP. The Switch 2 signature appears at 67–82; that stretch reads QERFQSLGVAFYRGAD. A Phosphoserine modification is found at S72. Residues N125, K126, D128, A156, and K157 each coordinate GTP. Glycyl lysine isopeptide (Lys-Gly) (interchain with G-Cter in ubiquitin) cross-links involve residues K191 and K194. S-geranylgeranyl cysteine attachment occurs at residues C205 and C207. Position 207 is a cysteine methyl ester (C207).

The protein belongs to the small GTPase superfamily. Rab family. In terms of assembly, interacts with NTRK1/TRKA. Interacts with RILP. Interacts with PSMA7. Interacts with RNF115. Interacts with FYCO1. Interacts with the PIK3C3/VPS34-PIK3R4 complex. The GTP-bound form interacts with OSBPL1A. The GTP-bound form interacts with RAC1. Interacts with CLN3. Interacts with CHM, the substrate-binding subunit of the Rab geranylgeranyltransferase complex. Interacts with C9orf72. Does not interact with HPS4 and the BLOC-3 complex (heterodimer of HPS1 and HPS4). Interacts with CLN5. Interacts with PLEKHM1 (via N- and C-terminus). Interacts with PRPH; the interaction is direct. Interacts with VPS13A. The GDP-bound form interacts with RIMOC1. Interacts with the MON1A-CCZ1B complex and this interaction is enhanced in the presence of RIMOC1. Interacts with VPS39 and VPS41. Forms a ternary complex with LAMP2 and RUFY4; the interaction with LAMP2 is mediated by RUFY4 (via RUN and coiled coil domains). Mg(2+) serves as cofactor. In terms of processing, deubiquitination at Lys-191 and Lys-194 by USP32. Post-translationally, phosphorylated at Ser-72 by LRRK1; phosphorylation is dependent on protein kinase C (PKC) activation of LRRK1. Prenylated. Prenylation is required for association with cellular membranes.

It is found in the cytoplasmic vesicle. Its subcellular location is the phagosome membrane. The protein localises to the late endosome membrane. The protein resides in the lysosome membrane. It localises to the melanosome membrane. It is found in the autophagosome membrane. Its subcellular location is the lipid droplet. The protein localises to the endosome membrane. The protein resides in the mitochondrion membrane. It catalyses the reaction GTP + H2O = GDP + phosphate + H(+). Its activity is regulated as follows. Regulated by guanine nucleotide exchange factors (GEFs) which promote the exchange of bound GDP for free GTP. Regulated by GTPase activating proteins (GAPs) which increase the GTP hydrolysis activity. Inhibited by GDP dissociation inhibitors (GDIs). The small GTPases Rab are key regulators of intracellular membrane trafficking, from the formation of transport vesicles to their fusion with membranes. Rabs cycle between an inactive GDP-bound form and an active GTP-bound form that is able to recruit to membranes different sets of downstream effectors directly responsible for vesicle formation, movement, tethering and fusion. In its active state, RAB7A binds to a variety of effector proteins playing a key role in the regulation of endo-lysosomal trafficking. Governs early-to-late endosomal maturation, microtubule minus-end as well as plus-end directed endosomal migration and positioning, and endosome-lysosome transport through different protein-protein interaction cascades. Also plays a central role in growth-factor-mediated cell signaling, nutrient-transporter-mediated nutrient uptake, neurotrophin transport in the axons of neurons and lipid metabolism. Also involved in regulation of some specialized endosomal membrane trafficking, such as maturation of melanosomes, pathogen-induced phagosomes (or vacuoles) and autophagosomes. Plays a role in the maturation and acidification of phagosomes that engulf pathogens, such as S.aureus and Mycobacteria. Plays a role in the fusion of phagosomes with lysosomes. In concert with RAC1, plays a role in regulating the formation of RBs (ruffled borders) in osteoclasts. Controls the endosomal trafficking and neurite outgrowth signaling of NTRK1/TRKA. Regulates the endocytic trafficking of the EGF-EGFR complex by regulating its lysosomal degradation. Involved in the ADRB2-stimulated lipolysis through lipophagy, a cytosolic lipase-independent autophagic pathway. Required for the exosomal release of SDCBP, CD63 and syndecan. Required for vesicular trafficking and cell surface expression of ACE2. May play a role in PRPH neuronal intermediate filament assembly. This chain is Ras-related protein Rab-7a (RAB7A), found in Canis lupus familiaris (Dog).